Consider the following 284-residue polypeptide: Bifunctional protein FolD (284 aa).

NADP(+) contacts are provided by residues glycine 165–serine 167, serine 190, and isoleucine 231.

Belongs to the tetrahydrofolate dehydrogenase/cyclohydrolase family. As to quaternary structure, homodimer.

It carries out the reaction (6R)-5,10-methylene-5,6,7,8-tetrahydrofolate + NADP(+) = (6R)-5,10-methenyltetrahydrofolate + NADPH. It catalyses the reaction (6R)-5,10-methenyltetrahydrofolate + H2O = (6R)-10-formyltetrahydrofolate + H(+). It functions in the pathway one-carbon metabolism; tetrahydrofolate interconversion. Catalyzes the oxidation of 5,10-methylenetetrahydrofolate to 5,10-methenyltetrahydrofolate and then the hydrolysis of 5,10-methenyltetrahydrofolate to 10-formyltetrahydrofolate. This is Bifunctional protein FolD from Streptococcus thermophilus (strain CNRZ 1066).